Reading from the N-terminus, the 394-residue chain is Elongation factor Tu 2 (394 aa).

Residues 10 to 204 (KPHVNVGTIG…ALDSYIPEPE (195 aa)) enclose the tr-type G domain. A G1 region spans residues 19–26 (GHVDHGKT). 19 to 26 (GHVDHGKT) contacts GTP. Thr-26 contributes to the Mg(2+) binding site. The interval 60–64 (GITIN) is G2. Residues 81-84 (DCPG) are G3. GTP contacts are provided by residues 81-85 (DCPGH) and 136-139 (NKCD). The interval 136 to 139 (NKCD) is G4. Residues 174–176 (SAL) are G5.

It belongs to the TRAFAC class translation factor GTPase superfamily. Classic translation factor GTPase family. EF-Tu/EF-1A subfamily. Monomer.

It is found in the cytoplasm. It carries out the reaction GTP + H2O = GDP + phosphate + H(+). GTP hydrolase that promotes the GTP-dependent binding of aminoacyl-tRNA to the A-site of ribosomes during protein biosynthesis. The chain is Elongation factor Tu 2 from Shewanella sp. (strain MR-4).